We begin with the raw amino-acid sequence, 309 residues long: Dicarboxylate carrier UCP2 (309 aa).

Residues 1-16 (MVGFKATDVPPTATVK) are Mitochondrial intermembrane-facing. Solcar repeat units follow at residues 11 to 106 (PTAT…VKQF), 114 to 203 (AGIG…IKDA), and 212 to 297 (DDLP…LKRA). The segment at 16–63 (KFLGAGTAACIADLITFPLDTAKVRLQIQGERQGPVRAAASAQYRGVL) is important for interaction with long-chain fatty acids. A helical membrane pass occupies residues 17–40 (FLGAGTAACIADLITFPLDTAKVR). Topologically, residues 41–77 (LQIQGERQGPVRAAASAQYRGVLCTILTMVRTEGPRS) are mitochondrial matrix. The chain crosses the membrane as a helical span at residues 78–103 (LYSGLVAGLQRQMSFASVRIGLYDSV). At 104–119 (KQFYTKGSEHAGIGSR) the chain is on the mitochondrial intermembrane side. A helical transmembrane segment spans residues 120 to 145 (LLAGSTTGALAVAVAQPTDVVKVRFQ). The Mitochondrial matrix portion of the chain corresponds to 146–173 (AQARAGSGRRYQSTVDAYKTIAREEGFR). The helical transmembrane segment at 174 to 199 (GLWKGTSPNVARNAIVNCAELVTYDL) threads the bilayer. Topologically, residues 200-217 (IKDALLKANLMTDDLPCH) are mitochondrial intermembrane. The chain crosses the membrane as a helical span at residues 218–242 (FTSAFGAGFCTTVIASPVDVVKTRY). Residues 243–268 (MNSALGQYSSAGHCALTMLQKEGPRA) are Mitochondrial matrix-facing. Residues 269–294 (FYKGFMPSFLRLGSWNVVMFVTYEQL) form a helical membrane-spanning segment. The important for interaction with long-chain fatty acids stretch occupies residues 278–285 (LRLGSWNV). At 295–309 (KRALMAACTSREAPF) the chain is on the mitochondrial intermembrane side.

It belongs to the mitochondrial carrier (TC 2.A.29) family. Homotetramer. Adopts an asymmetrical dimer of dimers functional form. Interacts with MICU1 (when methylated); leading to decrease the calcium sensitivity of MICU1.

The protein localises to the mitochondrion inner membrane. The catalysed reaction is L-aspartate(out) + phosphate(in) + H(+)(in) = L-aspartate(in) + phosphate(out) + H(+)(out). The enzyme catalyses oxaloacetate(out) + phosphate(in) + H(+)(in) = oxaloacetate(in) + phosphate(out) + H(+)(out). It carries out the reaction (S)-malate(out) + phosphate(in) + H(+)(in) = (S)-malate(in) + phosphate(out) + H(+)(out). It catalyses the reaction malonate(out) + phosphate(in) + H(+)(in) = malonate(in) + phosphate(out) + H(+)(out). The catalysed reaction is sulfate(out) + phosphate(in) + H(+)(in) = sulfate(in) + phosphate(out) + H(+)(out). The enzyme catalyses (S)-malate(out) = (S)-malate(in). It carries out the reaction L-aspartate(out) = L-aspartate(in). It catalyses the reaction phosphate(in) = phosphate(out). The catalysed reaction is chloride(in) = chloride(out). The enzyme catalyses H(+)(in) = H(+)(out). It carries out the reaction a long-chain fatty acid(out) = a long-chain fatty acid(in). Its function is as follows. Antiporter that exports dicarboxylate intermediates of the Krebs cycle in exchange for phosphate plus a proton across the inner membrane of mitochondria, a process driven by mitochondrial motive force with an overall impact on glycolysis, glutaminolysis and glutathione-dependent redox balance. Continuous export of oxaloacetate and related four-carbon dicarboxylates from mitochondrial matrix into the cytosol negatively regulates the oxidation of acetyl-CoA substrates via the Krebs cycle lowering the ATP/ADP ratio and reactive oxygen species (ROS) production. May mediate inducible proton entry into the mitochondrial matrix affecting ATP turnover as a protection mechanism against oxidative stress. The proton currents are most likely associated with fatty acid flipping across the inner membrane of mitochondria in a metabolic process regulated by free fatty acids and purine nucleotides. Regulates the use of glucose as a source of energy. Required for glucose-induced DRP1-dependent mitochondrial fission and neuron activation in the ventromedial nucleus of the hypothalamus (VMH). This mitochondrial adaptation mechanism modulates the VMH pool of glucose-excited neurons with an impact on systemic glucose homeostasis. Regulates ROS levels and metabolic reprogramming of macrophages during the resolution phase of inflammation. Attenuates ROS production in response to IL33 to preserve the integrity of the Krebs cycle required for persistent production of itaconate and subsequent GATA3-dependent differentiation of inflammation-resolving alternatively activated macrophages. Can unidirectionally transport anions including L-malate, L-aspartate, phosphate and chloride ions. Does not mediate adaptive thermogenesis. The protein is Dicarboxylate carrier UCP2 (UCP2) of Canis lupus familiaris (Dog).